The sequence spans 333 residues: Polygalacturonase inhibitor (333 aa).

Positions 1 to 27 (METSKLFLLSSSLLLVLLATRPCPSLS) are cleaved as a signal peptide. 2 cysteine pairs are disulfide-bonded: C30/C60 and C61/C68. LRR repeat units lie at residues 72-96 (THRI…VGDL), 97-120 (PFLE…AIAK), 121-144 (LKHL…FFSE), 145-169 (LKNL…LSLL), 170-192 (PNLG…SFGK), 194-220 (AGST…GFDP), 221-240 (NVMD…FFNA), 241-263 (NKST…RVEF), 264-288 (PKSL…MTSL), and 290-312 (LQFL…KLQS). 4 N-linked (GlcNAc...) asparagine glycosylation sites follow: N109, N133, N147, and N157. N241 is a glycosylation site (N-linked (GlcNAc...) asparagine). A glycan (N-linked (GlcNAc...) asparagine) is linked at N294. 2 disulfides stabilise this stretch: C301-C323 and C325-C332.

It belongs to the polygalacturonase-inhibiting protein family.

It localises to the secreted. The protein localises to the cell wall. It is found in the membrane. Functionally, inhibitor of fungal polygalacturonase. It is an important factor for plant resistance to phytopathogenic fungi. The sequence is that of Polygalacturonase inhibitor (pgip) from Vitis vinifera (Grape).